The sequence spans 317 residues: Probable cell division protein WhiA (317 aa).

The segment at residues 281-314 is a DNA-binding region (H-T-H motif); it reads SLKELGQMLDPPVGKSGINHRLRRIEKIAEELRK.

Belongs to the WhiA family.

Functionally, involved in cell division and chromosome segregation. The sequence is that of Probable cell division protein WhiA from Clostridium novyi (strain NT).